We begin with the raw amino-acid sequence, 561 residues long: MKFGSFATFAADIEATDADLDVVALVAELFDAADSDLDVVARFVQGRVFPAHSETKLDIGPQLCYTALSRAAGRNVDADDIEARLAETGDIGAVAGSLDLGGQTGLAAFGGGDDHADGLTVSGVADELAALAAAAGDGSQSEKVTLLFGLFNQCTSREARYLARLVLGEMRIGVGEGAVRDAIAEAFDVPTAAVQRALQVSNDYGLVAETARDSGTDALDAMGLEVGRPVQAMLAQAGTVTDALDEWHEAAVETKFDGARVQVHYDGDDVVLYSRNMENVTGALPELVEFVENNVTAPVIIDGEAVAADEDGDPLPFQEILKRFRRKHDVAAMREEISVELHAFDCLHAPSADGGEDLLDAPFSDRHRRLRSVVDDASAVSEVLVTDDADEIAAFEATALEGGHEGIMLKNPAAPYTPGDRGKDWLKRKPDVETLDLVVTGAEWGEGRRASVLGTFLLSARDAAGDGFETIGKVATGLTDEELAALSDRLEPHVRSEDGQTVDIEPAVVLEVGYEEIQASPTYSSGYALRFPRFVSVREDKTPTTADTIERVERLAAQQQQ.

Glu-253 contacts ATP. Lys-255 acts as the N6-AMP-lysine intermediate in catalysis. ATP is bound by residues Arg-260, Arg-275, Glu-304, Phe-344, Arg-421, and Lys-427.

It belongs to the ATP-dependent DNA ligase family. Mg(2+) serves as cofactor.

It carries out the reaction ATP + (deoxyribonucleotide)n-3'-hydroxyl + 5'-phospho-(deoxyribonucleotide)m = (deoxyribonucleotide)n+m + AMP + diphosphate.. DNA ligase that seals nicks in double-stranded DNA during DNA replication, DNA recombination and DNA repair. The polypeptide is DNA ligase (Halobacterium salinarum (strain ATCC 29341 / DSM 671 / R1)).